A 619-amino-acid polypeptide reads, in one-letter code: DNA mismatch repair protein MutL (619 aa).

The disordered stretch occupies residues 339-400; sequence AEKDDPPAPR…GGASWPHAQP (62 aa).

This sequence belongs to the DNA mismatch repair MutL/HexB family.

In terms of biological role, this protein is involved in the repair of mismatches in DNA. It is required for dam-dependent methyl-directed DNA mismatch repair. May act as a 'molecular matchmaker', a protein that promotes the formation of a stable complex between two or more DNA-binding proteins in an ATP-dependent manner without itself being part of a final effector complex. The sequence is that of DNA mismatch repair protein MutL from Klebsiella pneumoniae subsp. pneumoniae (strain ATCC 700721 / MGH 78578).